The chain runs to 641 residues: Putative ABC transporter ATP-binding protein MA_0870 (641 aa).

One can recognise an ABC transporter 1 domain in the interval 10 to 250; the sequence is IEIKDLWYTY…IEVFHRLGLR (241 aa). 44–51 serves as a coordination point for ATP; sequence GPTGCGKS. Positions 286 to 332 are disordered; it reads VKTPRNFSNPEEETGRRTDPAERNEFVNTGSGNIKYGDNRSENKGSE. Composition is skewed to basic and acidic residues over residues 298–310 and 322–332; these read ETGR…ERNE and GDNRSENKGSE. The ABC transporter 2 domain occupies 338-566; that stretch reads ISIRDLWSGY…IEILKQASLT (229 aa). Position 371-378 (371-378) interacts with ATP; that stretch reads GTNGSGKS.

The protein belongs to the ABC transporter superfamily.

Its subcellular location is the cell membrane. Functionally, probably part of an ABC transporter complex. Responsible for energy coupling to the transport system. The polypeptide is Putative ABC transporter ATP-binding protein MA_0870 (Methanosarcina acetivorans (strain ATCC 35395 / DSM 2834 / JCM 12185 / C2A)).